The primary structure comprises 124 residues: MSYAIIEIGGTQIRVEPGRFYEINHLDAAPEDSYVVDKVLLVKDGDNVTIGQPYVAGATVEGEILSHRRGRKVIVYKMQPKKKTRKKRGHRQELTRLLVKSISVNGTAIAEALEVDAKTPVVAG.

It belongs to the bacterial ribosomal protein bL21 family. Part of the 50S ribosomal subunit. Contacts protein L20.

Its function is as follows. This protein binds to 23S rRNA in the presence of protein L20. This Synechocystis sp. (strain ATCC 27184 / PCC 6803 / Kazusa) protein is Large ribosomal subunit protein bL21.